A 189-amino-acid polypeptide reads, in one-letter code: Protein shisa-like-2A (189 aa).

2 helical membrane-spanning segments follow: residues 48 to 68 (SFFP…LVGL) and 70 to 90 (TAAV…YLFI). The interval 98 to 189 (LDPGLSLQTT…PTPGPHGPVP (92 aa)) is disordered. A compositionally biased stretch (polar residues) spans 140–171 (NTHLESNKKQTVSPTCLPQNQFMATVTASNIP).

This sequence belongs to the shisa family.

The protein localises to the membrane. The protein is Protein shisa-like-2A (Shisal2a) of Mus musculus (Mouse).